Consider the following 420-residue polypeptide: MRKIIINGGKKLQGEVTVSGAKNSVVALIPAIILSDGVVTLDGVPAISDVDNLIEIIEVMGGSVKRDGETLEIDPRGVKDMPMPFGKINSLRASYYFYGSLLGRYGQAIVGLPGGCDLGPRPIDLHLKAFEAMGASIFYEGEAMRIATDAGQRIKGAHIYMDTVSVGATINTMLAAAKADGRTVIENAAREPEIIDVATLLNNMGARVRGAGTEVITIEGVESLHGTRHQVIPDRIEAGSYIAMAAAIGKGIKIKNVLYEHLESFICKLEAMGVRMTVEEDAIFVEEQGDLKPVDIKTSPYPGFATDLQQPMTPLLLKASGRGKIIDTIYEKRVNHVPELARMGADIQVLGGQIVYNGPTQLSGAPVKASDLRAGAALVTAGLMADGQTEITNIEFILRGYSNIIENLSDLGADIRLIED.

A phosphoenolpyruvate-binding site is contributed by 22-23; the sequence is KN. Arg-92 contacts UDP-N-acetyl-alpha-D-glucosamine. The Proton donor role is filled by Cys-116. The residue at position 116 (Cys-116) is a 2-(S-cysteinyl)pyruvic acid O-phosphothioketal. Residues 121 to 125, Asp-307, and Ile-329 contribute to the UDP-N-acetyl-alpha-D-glucosamine site; that span reads RPIDL.

It belongs to the EPSP synthase family. MurA subfamily.

The protein resides in the cytoplasm. The catalysed reaction is phosphoenolpyruvate + UDP-N-acetyl-alpha-D-glucosamine = UDP-N-acetyl-3-O-(1-carboxyvinyl)-alpha-D-glucosamine + phosphate. Its pathway is cell wall biogenesis; peptidoglycan biosynthesis. Cell wall formation. Adds enolpyruvyl to UDP-N-acetylglucosamine. The chain is UDP-N-acetylglucosamine 1-carboxyvinyltransferase 2 from Streptococcus thermophilus (strain CNRZ 1066).